A 283-amino-acid chain; its full sequence is 4-diphosphocytidyl-2-C-methyl-D-erythritol kinase (283 aa).

The active site involves K10. Residue 99 to 109 (PMGGGLGGGSS) participates in ATP binding. D141 is a catalytic residue.

Belongs to the GHMP kinase family. IspE subfamily. As to quaternary structure, homodimer.

It carries out the reaction 4-CDP-2-C-methyl-D-erythritol + ATP = 4-CDP-2-C-methyl-D-erythritol 2-phosphate + ADP + H(+). It functions in the pathway isoprenoid biosynthesis; isopentenyl diphosphate biosynthesis via DXP pathway; isopentenyl diphosphate from 1-deoxy-D-xylulose 5-phosphate: step 3/6. Functionally, catalyzes the phosphorylation of the position 2 hydroxy group of 4-diphosphocytidyl-2C-methyl-D-erythritol. The chain is 4-diphosphocytidyl-2-C-methyl-D-erythritol kinase from Citrobacter koseri (strain ATCC BAA-895 / CDC 4225-83 / SGSC4696).